The following is a 373-amino-acid chain: tRNA-specific 2-thiouridylase MnmA (373 aa).

ATP is bound by residues 12–19 (GMSGGVDS) and M38. The tract at residues 98–100 (NPD) is interaction with target base in tRNA. The active-site Nucleophile is the C103. Residues C103 and C200 are joined by a disulfide bond. G127 contributes to the ATP binding site. Residues 150–152 (KDQ) form an interaction with tRNA region. C200 (cysteine persulfide intermediate) is an active-site residue. Positions 312 to 313 (RY) are interaction with tRNA.

Belongs to the MnmA/TRMU family.

Its subcellular location is the cytoplasm. The catalysed reaction is S-sulfanyl-L-cysteinyl-[protein] + uridine(34) in tRNA + AH2 + ATP = 2-thiouridine(34) in tRNA + L-cysteinyl-[protein] + A + AMP + diphosphate + H(+). In terms of biological role, catalyzes the 2-thiolation of uridine at the wobble position (U34) of tRNA, leading to the formation of s(2)U34. This Streptococcus pyogenes serotype M18 (strain MGAS8232) protein is tRNA-specific 2-thiouridylase MnmA.